Reading from the N-terminus, the 213-residue chain is Ras-related protein Rab-4B (213 aa).

Ala-2 carries the post-translational modification N-acetylalanine. Gly-18, Thr-19, Gly-20, Lys-21, Ser-22, and Cys-23 together coordinate GDP. Residues Gly-18, Thr-19, Gly-20, Lys-21, Ser-22, Cys-23, Ser-37, His-39, and Thr-40 each coordinate GTP. Ser-22 contributes to the Mg(2+) binding site. Residues 39–44 (HTIGVE) carry the Switch 1 motif. Mg(2+)-binding residues include Thr-40 and Asp-63. The Switch 2 motif lies at 65–74 (AGQERFRSVT). Gly-66 serves as a coordination point for GTP. Gln-67 bears the 5-glutamyl serotonin mark. The GDP site is built by Asn-121, Lys-122, Asp-124, Ala-152, and Leu-153. The GTP site is built by Asn-121, Lys-122, Asp-124, Ala-152, and Leu-153. A phosphoserine mark is found at Ser-185 and Ser-193. 2 S-geranylgeranyl cysteine lipidation sites follow: Cys-211 and Cys-213. Position 213 is a cysteine methyl ester (Cys-213).

Belongs to the small GTPase superfamily. Rab family. As to quaternary structure, interacts (GTP-bound form) with RUFY1; the interaction allows endosomal tethering and fusion. Mg(2+) serves as cofactor. In terms of processing, serotonylation of Gln-67 by TGM2 during activation and aggregation of platelets leads to constitutive activation of GTPase activity.

It localises to the cell membrane. It is found in the early endosome membrane. It catalyses the reaction GTP + H2O = GDP + phosphate + H(+). With respect to regulation, regulated by guanine nucleotide exchange factors (GEFs) which promote the exchange of bound GDP for free GTP. Regulated by GTPase activating proteins (GAPs) which increase the GTP hydrolysis activity. Inhibited by GDP dissociation inhibitors (GDIs). In terms of biological role, the small GTPases Rab are key regulators of intracellular membrane trafficking, from the formation of transport vesicles to their fusion with membranes. Rabs cycle between an inactive GDP-bound form and an active GTP-bound form that is able to recruit to membranes different set of downstream effectors directly responsible for vesicle formation, movement, tethering and fusion. RAB4B mediates endosomal tethering and fusion through the interaction with RUFY1 and RAB14. Acts as a regulator of platelet alpha-granule release during activation and aggregation of platelets. In Mus musculus (Mouse), this protein is Ras-related protein Rab-4B.